The following is a 100-amino-acid chain: Omega toxin Ap2 (100 aa).

Residues 1–22 form the signal peptide; it reads MNTTQVILFAVVLVLTVTVGQA. Residues 23-57 constitute a propeptide that is removed on maturation; that stretch reads DEDSAETSLLRKLEEAEASMFGQYLEESKNSPEQR. 3 cysteine pairs are disulfide-bonded: Cys-58-Cys-74, Cys-65-Cys-79, and Cys-73-Cys-94. The residue at position 99 (Ser-99) is a Serine amide.

The protein belongs to the neurotoxin 14 (magi-1) family. 08 (Ltx-4) subfamily. In terms of tissue distribution, expressed by the venom duct.

It localises to the secreted. Inhibits 31.17% of Cav2.1/CACNA1A current at 1 uM concentration. This chain is Omega toxin Ap2, found in Acanthoscurria paulensis (Brazilian giant black tarantula spider).